We begin with the raw amino-acid sequence, 137 residues long: Golgin subfamily A member 7 (137 aa).

Residues Cys69 and Cys72 are each lipidated (S-palmitoyl cysteine).

The protein belongs to the ERF4 family. As to quaternary structure, interacts with ZDHHC9.

The protein localises to the golgi apparatus membrane. In terms of biological role, may be involved in protein transport from Golgi to cell surface. The ZDHHC9-GOLGA7 complex is a palmitoyltransferase specific for HRAS and NRAS. This chain is Golgin subfamily A member 7 (GOLGA7), found in Gallus gallus (Chicken).